A 440-amino-acid chain; its full sequence is MNTILPADPARDEVLAGRPTLWVNPSYRKRAIDTSDLPVSRDDVQIARLNWQRLAPLLAECFPELKDSDGEIRSELVELKELREALGYRTREFGNVFIKADSHLPVAGSIKARGGVYEVFLFAENLARQNGLLGDGEDIRKLAAEEARSFFSGYTVAVGSTGNLGLSVGIAARALGFKATVHMSSDAKAWKVERLRRLGVEVIQHEADYTSAVENARDIADADPTIYFVDDEQSRHLFLGYSAAASELAAQLDERGITIDEENPLFLYLPCGIGGAPGGVAFGAKAIFGDNVHAFFVEPVQSPCTLVHMMSGSQELVSVYDVGLTNKTEADGMAVARMSAFVAKVMREMLAGVYTAADDDLFKLLRMAWITQRQKLEPSAAAALLGPHFLVHHGEGRRFQAEQGIEEKMSRATHILWTTGGSFVPEEQFQNFLRQAEAVG.

Position 111 is an N6-(pyridoxal phosphate)lysine (Lys-111).

The protein belongs to the serine/threonine dehydratase family. DsdA subfamily. The cofactor is pyridoxal 5'-phosphate.

The catalysed reaction is D-serine = pyruvate + NH4(+). The protein is Probable D-serine dehydratase of Rhizobium leguminosarum bv. trifolii (strain WSM2304).